The chain runs to 413 residues: Alpha-1-antitrypsin 1-1 (413 aa).

An N-terminal signal peptide occupies residues 1 to 24 (MTPSISWGLLLLAGLCCLVPSFLA). N-linked (GlcNAc...) asparagine glycans are attached at residues asparagine 64, asparagine 101, and asparagine 265. Residues 368 to 387 (AVTVLQMVPMSMPPILRFDH) are RCL.

The protein belongs to the serpin family.

The protein localises to the secreted. Its function is as follows. Inhibitor of serine proteases. Its primary target is elastase, but it also has a moderate affinity for plasmin and thrombin. The polypeptide is Alpha-1-antitrypsin 1-1 (Serpina1a) (Mus musculus (Mouse)).